Reading from the N-terminus, the 160-residue chain is 2-C-methyl-D-erythritol 2,4-cyclodiphosphate synthase (160 aa).

Residues Asp10 and His12 each contribute to the a divalent metal cation site. 4-CDP-2-C-methyl-D-erythritol 2-phosphate is bound by residues 10 to 12 and 36 to 37; these read DVH and HS. His44 lines the a divalent metal cation pocket. Residues 58–60, 134–137, Phe141, and Arg144 contribute to the 4-CDP-2-C-methyl-D-erythritol 2-phosphate site; these read DIG and TTTE.

This sequence belongs to the IspF family. In terms of assembly, homotrimer. A divalent metal cation is required as a cofactor.

It carries out the reaction 4-CDP-2-C-methyl-D-erythritol 2-phosphate = 2-C-methyl-D-erythritol 2,4-cyclic diphosphate + CMP. The protein operates within isoprenoid biosynthesis; isopentenyl diphosphate biosynthesis via DXP pathway; isopentenyl diphosphate from 1-deoxy-D-xylulose 5-phosphate: step 4/6. Functionally, involved in the biosynthesis of isopentenyl diphosphate (IPP) and dimethylallyl diphosphate (DMAPP), two major building blocks of isoprenoid compounds. Catalyzes the conversion of 4-diphosphocytidyl-2-C-methyl-D-erythritol 2-phosphate (CDP-ME2P) to 2-C-methyl-D-erythritol 2,4-cyclodiphosphate (ME-CPP) with a corresponding release of cytidine 5-monophosphate (CMP). The polypeptide is 2-C-methyl-D-erythritol 2,4-cyclodiphosphate synthase (Phocaeicola vulgatus (strain ATCC 8482 / DSM 1447 / JCM 5826 / CCUG 4940 / NBRC 14291 / NCTC 11154) (Bacteroides vulgatus)).